Reading from the N-terminus, the 68-residue chain is MATKASNLVVFLLSLLLLFLLISFQVGVADATRNKRQGQEQRVDYDYPRPPTAPIYLPPSKSRKGKGP.

Positions 1–31 (MATKASNLVVFLLSLLLLFLLISFQVGVADA) are cleaved as a signal peptide. The tract at residues 33–68 (RNKRQGQEQRVDYDYPRPPTAPIYLPPSKSRKGKGP) is disordered. Over residues 37–47 (QGQEQRVDYDY) the composition is skewed to basic and acidic residues. The segment covering 48 to 57 (PRPPTAPIYL) has biased composition (pro residues). The SCOOP motif motif lies at 54–68 (PIYLPPSKSRKGKGP). A SxS motif essential for MIK2 binding motif is present at residues 60–62 (SKS).

Belongs to the serine rich endogenous peptide (SCOOP) phytocytokine family. Interacts with MIK2 (via extracellular leucine-rich repeat domain); this interaction triggers the formation of complex between MIK2 and the BAK1/SERK3 and SERK4 coreceptors, and subsequent BAK1 activation by phosphorylation. As to expression, mostly expressed in stems and flowers and, to a lower extent, in seedlings shoots, roots, siliques, seeds and leaves.

Its subcellular location is the cell membrane. It localises to the secreted. The protein localises to the extracellular space. It is found in the apoplast. Its function is as follows. Brassicaceae-specific phytocytokine (plant endogenous peptide released into the apoplast) perceived by MIK2 in a BAK1/SERK3 and SERK4 coreceptors-dependent manner, that modulates various physiological and antimicrobial processes including growth prevention and reactive oxygen species (ROS) response regulation. Promotes the expression of immune-related marker genes (e.g. WRKY30, WRKY33 and CYP81F2) in a MIK2-dependent manner. Inhibits root growth and regulates root meristems. Prevents general growth and development. Exhibits antibacterial effects against Pseudomonas syringae pv. tomato DC3000, Ralstonia solanacearum, Bacillus subtilis and Agrobacterium tumefaciens, thus being an antimicrobial peptide (AMP). The sequence is that of Serine rich endogenous peptide 13 from Arabidopsis thaliana (Mouse-ear cress).